Here is a 118-residue protein sequence, read N- to C-terminus: MATNTTEVKAIARFIRISAYKVRRVLDQIRGRSYREALIILEFMPYRATEPILKVLRSAAANAEHNAGLDRTQLVITQAYADQGPPLKRFQPRAQGRAYQIRKPTCHITVAVGAAPEK.

Belongs to the universal ribosomal protein uL22 family. In terms of assembly, part of the 50S ribosomal subunit.

In terms of biological role, this protein binds specifically to 23S rRNA; its binding is stimulated by other ribosomal proteins, e.g. L4, L17, and L20. It is important during the early stages of 50S assembly. It makes multiple contacts with different domains of the 23S rRNA in the assembled 50S subunit and ribosome. Functionally, the globular domain of the protein is located near the polypeptide exit tunnel on the outside of the subunit, while an extended beta-hairpin is found that lines the wall of the exit tunnel in the center of the 70S ribosome. In Nostoc punctiforme (strain ATCC 29133 / PCC 73102), this protein is Large ribosomal subunit protein uL22.